The chain runs to 357 residues: UPF0283 membrane protein BAbS19_I09770 (357 aa).

Residues M1–K36 form a disordered region. Basic and acidic residues predominate over residues E27–K36. 2 helical membrane-spanning segments follow: residues I78–L98 and L109–L129.

The protein belongs to the UPF0283 family.

Its subcellular location is the cell inner membrane. In Brucella abortus (strain S19), this protein is UPF0283 membrane protein BAbS19_I09770.